The sequence spans 870 residues: Phycobiliprotein ApcE (870 aa).

Cys184 contributes to the (2R,3E)-phycocyanobilin binding site. PBS-linker domains follow at residues 241 to 421 (DLQG…FRTI), 482 to 665 (GAGI…KIEK), and 679 to 856 (SSLN…KQNR).

This sequence belongs to the phycobilisome linker protein family. In terms of processing, contains one covalently linked bilin chromophore. This protein autochromophorylates (Potential).

It is found in the plastid. The protein resides in the chloroplast thylakoid membrane. This protein is postulated to act both as terminal energy acceptor and as a linker polypeptide that stabilizes the phycobilisome architecture. May have intrinsic bilin lyase activity. This Cyanidium caldarium (Red alga) protein is Phycobiliprotein ApcE (apcE).